Reading from the N-terminus, the 472-residue chain is Probable dipeptidase A (472 aa).

The active site involves Cys10.

It belongs to the peptidase C69 family.

It carries out the reaction an L-aminoacyl-L-amino acid + H2O = 2 an L-alpha-amino acid. The sequence is that of Probable dipeptidase A (pepDA) from Streptococcus pyogenes serotype M1.